Here is a 294-residue protein sequence, read N- to C-terminus: rRNA 2'-O-methyltransferase fibrillarin (294 aa).

A disordered region spans residues 1-62; sequence MGKDFKSGGG…GKFGAKGPRG (62 aa). Positions 20–56 are enriched in gly residues; the sequence is GPGGPGGRPFNKGPGGPGGPGGKFGGGRPGGPGGKFG. 3 positions are modified to asymmetric dimethylarginine: Arg-27, Arg-47, and Arg-61. S-adenosyl-L-methionine-binding positions include 151 to 152, 170 to 171, 195 to 196, and 215 to 218; these read TT, EF, DA, and DVAQ.

It belongs to the methyltransferase superfamily. Fibrillarin family. In terms of assembly, component of box C/D small nucleolar ribonucleoprotein (snoRNP) particles. It is associated with the U3, U8 and U13 small nuclear RNAs. By homology to other fibrillarins, some or all of the N-terminal domain arginines are modified to asymmetric dimethylarginine (DMA).

Its subcellular location is the nucleus. It localises to the nucleolus. It carries out the reaction L-glutaminyl-[histone H2A] + S-adenosyl-L-methionine = N(5)-methyl-L-glutaminyl-[histone H2A] + S-adenosyl-L-homocysteine + H(+). Its function is as follows. S-adenosyl-L-methionine-dependent methyltransferase that has the ability to methylate both RNAs and proteins. Involved in pre-rRNA processing. Utilizes the methyl donor S-adenosyl-L-methionine to catalyze the site-specific 2'-hydroxyl methylation of ribose moieties in pre-ribosomal RNA. Site specificity is provided by a guide RNA that base pairs with the substrate. Methylation occurs at a characteristic distance from the sequence involved in base pairing with the guide RNA. Also acts as a protein methyltransferase by mediating methylation of 'Gln-105' of histone H2A (H2AQ105me), a modification that impairs binding of the FACT complex and is specifically present at 35S ribosomal DNA locus. This chain is rRNA 2'-O-methyltransferase fibrillarin (FIB), found in Tetrahymena thermophila.